The chain runs to 213 residues: Phosphatidylethanolamine N-methyltransferase A (213 aa).

Residues 1–21 (MIVEHAIDYIDYLMNYVDFTE) are Lumenal-facing. Positions 22-42 (KYFLLTIACVVFNPTWWNITA) form an intramembrane region, helical. Residues 43–54 (RMEYKTKFMTKI) lie on the Lumenal side of the membrane. A helical membrane pass occupies residues 55-75 (CGSKENGCYLLAFLIFSLGIL). At 76-102 (RDWLFSEALIRQPIFQEFDRFEVEVLS) the chain is on the cytoplasmic side. The helical transmembrane segment at 103–123 (YILYGFGGILVLAAYLKLGIT) threads the bilayer. Position 107 to 109 (107 to 109 (GFG)) interacts with S-adenosyl-L-methionine. Residues 124 to 166 (GTYLGDYFGILMKERVTGFPFNVMNNPMYNGSVMLFIAHALSY) are Lumenal-facing. The helical transmembrane segment at 167 to 187 (KSVAGLVLSFVVYVVYKFALI) threads the bilayer. At 188-213 (FEESFTNYIYSTAAANAAKKNKSKSK) the chain is on the cytoplasmic side. Residue 189 to 190 (EE) participates in S-adenosyl-L-methionine binding.

Belongs to the class VI-like SAM-binding methyltransferase superfamily. PEMT/PEM2 methyltransferase family.

The protein localises to the endoplasmic reticulum membrane. The protein resides in the mitochondrion membrane. It carries out the reaction a 1,2-diacyl-sn-glycero-3-phospho-N-methylethanolamine + S-adenosyl-L-methionine = a 1,2-diacyl-sn-glycero-3-phospho-N,N-dimethylethanolamine + S-adenosyl-L-homocysteine + H(+). The catalysed reaction is a 1,2-diacyl-sn-glycero-3-phospho-N,N-dimethylethanolamine + S-adenosyl-L-methionine = a 1,2-diacyl-sn-glycero-3-phosphocholine + S-adenosyl-L-homocysteine + H(+). The enzyme catalyses a 1,2-diacyl-sn-glycero-3-phosphoethanolamine + S-adenosyl-L-methionine = a 1,2-diacyl-sn-glycero-3-phospho-N-methylethanolamine + S-adenosyl-L-homocysteine + H(+). Its pathway is phospholipid metabolism; phosphatidylcholine biosynthesis. In terms of biological role, catalyzes the three sequential steps of the methylation pathway of phosphatidylcholine biosynthesis, the SAM-dependent methylation of phosphatidylethanolamine (PE) to phosphatidylmonomethylethanolamine (PMME), PMME to phosphatidyldimethylethanolamine (PDME), and PDME to phosphatidylcholine (PC). This is Phosphatidylethanolamine N-methyltransferase A (pemtA) from Dictyostelium discoideum (Social amoeba).